Consider the following 98-residue polypeptide: ATP synthase subunit c (98 aa).

Transmembrane regions (helical) follow at residues 27-47 and 73-93; these read ALAL…GLGL and IIGA…FFVV.

Belongs to the ATPase C chain family. F-type ATPases have 2 components, F(1) - the catalytic core - and F(0) - the membrane proton channel. F(1) has five subunits: alpha(3), beta(3), gamma(1), delta(1), epsilon(1). F(0) has three main subunits: a(1), b(2) and c(10-14). The alpha and beta chains form an alternating ring which encloses part of the gamma chain. F(1) is attached to F(0) by a central stalk formed by the gamma and epsilon chains, while a peripheral stalk is formed by the delta and b chains.

It is found in the cell inner membrane. In terms of biological role, f(1)F(0) ATP synthase produces ATP from ADP in the presence of a proton or sodium gradient. F-type ATPases consist of two structural domains, F(1) containing the extramembraneous catalytic core and F(0) containing the membrane proton channel, linked together by a central stalk and a peripheral stalk. During catalysis, ATP synthesis in the catalytic domain of F(1) is coupled via a rotary mechanism of the central stalk subunits to proton translocation. Functionally, key component of the F(0) channel; it plays a direct role in translocation across the membrane. A homomeric c-ring of between 10-14 subunits forms the central stalk rotor element with the F(1) delta and epsilon subunits. This is ATP synthase subunit c from Protochlamydia amoebophila (strain UWE25).